The primary structure comprises 391 residues: Somatostatin receptor type 1 (391 aa).

Over residues Met1–Ser11 the composition is skewed to low complexity. Residues Met1–Thr49 are disordered. Topologically, residues Met1–Gly55 are extracellular. Residue Asn4 is glycosylated (N-linked (GlcNAc...) asparagine). Gly residues predominate over residues Cys20–Ala33. N-linked (GlcNAc...) asparagine glycosylation is found at Asn43 and Asn47. The helical transmembrane segment at Ser56–Leu83 threads the bilayer. Residues Arg84–Asn93 are Cytoplasmic-facing. The helical transmembrane segment at Ile94–Leu119 threads the bilayer. Topologically, residues Arg120–Arg130 are extracellular. Cys129 and Cys207 are disulfide-bonded. Residues Leu131–Val152 traverse the membrane as a helical segment. Topologically, residues Asp153–Lys174 are cytoplasmic. The chain crosses the membrane as a helical span at residues Val175 to Ser195. Topologically, residues Arg196–Trp218 are extracellular. The helical transmembrane segment at Leu219–Val243 threads the bilayer. Topologically, residues Leu244–Thr269 are cytoplasmic. Residues Leu270–Phe295 form a helical membrane-spanning segment. Residues Ala296–Thr302 lie on the Extracellular side of the membrane. A helical transmembrane segment spans residues Val303–Ser326. Residues Asp327 to Leu391 are Cytoplasmic-facing. Residue Cys338 is the site of S-palmitoyl cysteine attachment.

Belongs to the G-protein coupled receptor 1 family. In terms of assembly, interacts with SKB1.

The protein localises to the cell membrane. Receptor for somatostatin with higher affinity for somatostatin-14 than -28. This receptor is coupled via pertussis toxin sensitive G proteins to inhibition of adenylyl cyclase. In addition it stimulates phosphotyrosine phosphatase and Na(+)/H(+) exchanger via pertussis toxin insensitive G proteins. This chain is Somatostatin receptor type 1 (SSTR1), found in Canis lupus familiaris (Dog).